The following is a 358-amino-acid chain: Src kinase-associated phosphoprotein 2 (358 aa).

Residues serine 5 and serine 9 each carry the phosphoserine modification. The segment at 14–64 (PEEIRNLLADVETFVADTLKGENLSKKAKEKRESLIKKIKDVKSVYLQEFQ) is homodimerization. The residue at position 75 (tyrosine 75) is a Phosphotyrosine. A phosphoserine mark is found at serine 87 and serine 90. The PH domain maps to 116–219 (FVIKAGYLEK…WVQQLKFILQ (104 aa)). 2 positions are modified to phosphotyrosine: tyrosine 151 and tyrosine 197. Phosphoserine is present on serine 223. Positions 232-292 (ERGELYDDVD…RDSVHHTSGD (61 aa)) are disordered. A compositionally biased stretch (acidic residues) spans 255–270 (IDDEIYEELPEEEEDT). Tyrosine 260 carries the post-translational modification Phosphotyrosine; by FYN. Phosphoserine is present on residues serine 272, serine 282, and serine 285. Basic and acidic residues predominate over residues 274-292 (KMDEQGKGSRDSVHHTSGD). One can recognise an SH3 domain in the interval 296–357 (DYANFYQGLW…PKAYLMEMYD (62 aa)).

It belongs to the SKAP family. Interacts with LAT, GRB2, PTK2B and PRAM1. Homodimer. Interacts with FYB1, which is required for SKAP2 protein stability. Interacts with PTPNS1. Part of a complex consisting of SKAP2, FYB1 and PTPNS1. Part of a complex consisting of SKAP2, FYB1 and PIRB. May interact with actin. May interact with FYN, HCK and LYN. Interacts with FASLG. Dephosphorylated on Tyr-75 by PTPN22. Phosphorylated by FYN on Tyr-260. In case of infection with Y.pseudotuberculosis, dephosphorylated by bacterial phosphatase yopH. As to expression, expressed in kidney, lung, liver, spleen, bone marrow and testis. Present in T-cells, B-cells, and all cells of the myelomonocytic lineage. Present in all brain regions, with highest levels in neurons from the Purkinje cell layer, hippocampal gyrus, cortex and substantia nigra (at protein level).

It is found in the cytoplasm. Its function is as follows. May be involved in B-cell and macrophage adhesion processes. In B-cells, may act by coupling the B-cell receptor (BCR) to integrin activation. May play a role in src signaling pathway. This is Src kinase-associated phosphoprotein 2 (Skap2) from Mus musculus (Mouse).